A 457-amino-acid chain; its full sequence is Acetylcholine receptor subunit alpha (457 aa).

The first 20 residues, 1 to 20 (MEPWPLLLLFSLCSAGLVLG), serve as a signal peptide directing secretion. Residues 21-232 (SEHETRLVAK…YHFVMQRLPL (212 aa)) are Extracellular-facing. Disulfide bonds link cysteine 148-cysteine 162 and cysteine 212-cysteine 213. Residue asparagine 161 is glycosylated (N-linked (GlcNAc...) asparagine). Residues 233-253 (YFIVNVIIPCLLFSFLTGLVF) form a helical membrane-spanning segment. At 254-264 (YLPTDSGEKMT) the chain is on the cytoplasmic side. A helical transmembrane segment spans residues 265-285 (LSISVLLSLTVFLLVIVELIP). Over 286 to 296 (STSSAVPLIGK) the chain is Extracellular. Residues 297-317 (YMLFTMVFVIASIIITVIVIN) traverse the membrane as a helical segment. Residues 318–427 (THHRSPSTHV…EWKYVAMVMD (110 aa)) are Cytoplasmic-facing. The chain crosses the membrane as a helical span at residues 428-448 (HILLGVFMLVCIIGTLAVFAG). The Extracellular segment spans residues 449-457 (RLIELNQQG).

The protein belongs to the ligand-gated ion channel (TC 1.A.9) family. Acetylcholine receptor (TC 1.A.9.1) subfamily. Alpha-1/CHRNA1 sub-subfamily. In terms of assembly, one of the alpha chains that assemble within the acetylcholine receptor, a pentamer of two alpha chains, a beta, a delta, and a gamma (in immature muscle) or epsilon (in mature muscle) chains. The muscle heteropentamer composed of alpha-1, beta-1, delta, epsilon subunits interacts with the alpha-conotoxin ImII. Is able to interact with other subunits of the acetylcholine receptor but is not assembled into functional acetylcholine-gated cation-selective channels. Isoform 1 is only expressed in skeletal muscle. Isoform 2 is constitutively expressed in skeletal muscle, brain, heart, kidney, liver, lung and thymus.

Its subcellular location is the postsynaptic cell membrane. The protein resides in the cell membrane. The catalysed reaction is K(+)(in) = K(+)(out). It carries out the reaction Na(+)(in) = Na(+)(out). Its function is as follows. Upon acetylcholine binding, the AChR responds by an extensive change in conformation that affects all subunits and leads to opening of an ion-conducting channel across the plasma membrane. Non functional acetylcholine receptor alpha subunit which is not integrated into functional acetylcholine-gated cation-selective channels. In Homo sapiens (Human), this protein is Acetylcholine receptor subunit alpha.